Here is a 246-residue protein sequence, read N- to C-terminus: Probable maleylacetoacetate isomerase 1 (246 aa).

Residues 32-116 form the GST N-terminal domain; that stretch reads TKPILYSYWP…YLEETRPQPA (85 aa). Glutathione-binding positions include 42–47, Val-88, 100–101, Gln-140, and 144–146; these read SSCSWR, DS, and NVS. A GST C-terminal domain is found at 121–241; sequence DPVKRAKIRE…HPSTQPDCPP (121 aa).

This sequence belongs to the GST superfamily. Zeta family. Glutathione serves as cofactor.

It is found in the cytoplasm. The catalysed reaction is 4-maleylacetoacetate = 4-fumarylacetoacetate. It carries out the reaction RX + glutathione = an S-substituted glutathione + a halide anion + H(+). It functions in the pathway amino-acid degradation; L-phenylalanine degradation; acetoacetate and fumarate from L-phenylalanine: step 5/6. Catalyzes the glutathione dependent oxygenation of dichloroacetic acid to glyoxylic acid in vitro. Possesses low glutathione thioltransferase activity toward 4-hydroxynonenal (4-HNE). Has no glutathione thioltransferase activity with adrenochrome, phenethyl isothiocyanate (PEITC), 5-hydroperoxyeicosatetraenoic acid ((5S)-HpETE), prostaglandin A2 (PGA2) or 2-hydroxyethyldisulfide (HED). The sequence is that of Probable maleylacetoacetate isomerase 1 (GstZ1) from Drosophila melanogaster (Fruit fly).